The following is a 95-amino-acid chain: Protein translocase subunit SecE (95 aa).

The interval 1–35 (MTDAVGSIDMPDAEDEAPESKKKSRKGGKRGKKGP) is disordered. Positions 22–35 (KKSRKGGKRGKKGP) are enriched in basic residues. Residues 67–87 (VVIVFVVVMIGLVTVLDIGFA) form a helical membrane-spanning segment.

Belongs to the SecE/SEC61-gamma family. As to quaternary structure, component of the Sec protein translocase complex. Heterotrimer consisting of SecY, SecE and SecG subunits. The heterotrimers can form oligomers, although 1 heterotrimer is thought to be able to translocate proteins. Interacts with the ribosome. Interacts with SecDF, and other proteins may be involved. Interacts with SecA.

It is found in the cell membrane. Essential subunit of the Sec protein translocation channel SecYEG. Clamps together the 2 halves of SecY. May contact the channel plug during translocation. The protein is Protein translocase subunit SecE of Streptomyces griseus.